A 75-amino-acid chain; its full sequence is UPF0150 protein TM_1313 (75 aa).

Belongs to the UPF0150 family.

This Thermotoga maritima (strain ATCC 43589 / DSM 3109 / JCM 10099 / NBRC 100826 / MSB8) protein is UPF0150 protein TM_1313.